The sequence spans 447 residues: Probable glycine dehydrogenase (decarboxylating) subunit 1 (447 aa).

It belongs to the GcvP family. N-terminal subunit subfamily. The glycine cleavage system is composed of four proteins: P, T, L and H. In this organism, the P 'protein' is a heterodimer of two subunits.

The enzyme catalyses N(6)-[(R)-lipoyl]-L-lysyl-[glycine-cleavage complex H protein] + glycine + H(+) = N(6)-[(R)-S(8)-aminomethyldihydrolipoyl]-L-lysyl-[glycine-cleavage complex H protein] + CO2. Its function is as follows. The glycine cleavage system catalyzes the degradation of glycine. The P protein binds the alpha-amino group of glycine through its pyridoxal phosphate cofactor; CO(2) is released and the remaining methylamine moiety is then transferred to the lipoamide cofactor of the H protein. The protein is Probable glycine dehydrogenase (decarboxylating) subunit 1 of Bacillus cereus (strain ATCC 10987 / NRS 248).